A 55-amino-acid chain; its full sequence is Large ribosomal subunit protein bL33 (55 aa).

It belongs to the bacterial ribosomal protein bL33 family.

The protein is Large ribosomal subunit protein bL33 of Clavibacter sepedonicus (Clavibacter michiganensis subsp. sepedonicus).